The sequence spans 663 residues: Cytochrome bo(3) ubiquinol oxidase subunit 1 (663 aa).

The Periplasmic segment spans residues 1 to 16 (MFGKLSLDAVPFHEPI). The chain crosses the membrane as a helical span at residues 17–35 (VMVTIAGIILGGLALVGLI). Residues 36–52 (TYFGKWTYLWKEWLTSV) are Cytoplasmic-facing. Residues 53–80 (DHKRLGIMYIIVAIVMLLRGFADAIMMR) form a helical membrane-spanning segment. Ubiquinone-8 is bound by residues arginine 71 and aspartate 75. Residues 81-95 (SQQALASAGEAGFLP) are Periplasmic-facing. Residues 96–132 (PHHYDQIFTAHGVIMIFFVAMPFVIGLMNLVVPLQIG) form a helical membrane-spanning segment. Residue histidine 98 coordinates ubiquinone-8. Histidine 106 provides a ligand contact to heme b. Residues 133-137 (ARDVA) lie on the Cytoplasmic side of the membrane. The chain crosses the membrane as a helical span at residues 138–161 (FPFLNNLSFWFTVVGVILVNVSLG). The Periplasmic portion of the chain corresponds to 162 to 184 (VGEFAQTGWLAYPPLSGIEYSPG). Tryptophan 170 serves as a coordination point for heme b. Residues 185 to 215 (VGVDYWIWSLQLSGIGTTLTGINFFVTILKM) form a helical membrane-spanning segment. Residues 216–224 (RAPGMTMFK) are Cytoplasmic-facing. The helical transmembrane segment at 225–260 (MPVFTWASLCANVLIIASFPILTVTVALLTLDRYLG) threads the bilayer. Over 261–270 (THFFTNDMGG) the chain is Periplasmic. Residues 271-307 (NMMMYINLIWAWGHPEVYILILPVFGVFSEIAATFSR) form a helical membrane-spanning segment. A Cu(2+)-binding site is contributed by histidine 284. Positions 284-288 (HPEVY) form a cross-link, 1'-histidyl-3'-tyrosine (His-Tyr). Tyrosine 288 lines the Fe(II)-heme o pocket. The Cytoplasmic portion of the chain corresponds to 308–311 (KRLF). Residues 312–326 (GYTSLVWATVCITVL) traverse the membrane as a helical segment. The Periplasmic portion of the chain corresponds to 327-340 (SFIVWLHHFFTMGA). 2 residues coordinate Cu(2+): histidine 333 and histidine 334. The helical transmembrane segment at 341–369 (GANVNAFFGITTMIIAIPTGVKIFNWLFT) threads the bilayer. At 370-377 (MYQGRIVF) the chain is on the cytoplasmic side. The chain crosses the membrane as a helical span at residues 378–409 (HSAMLWTIGFIVTFSVGGMTGVLLAVPGADFV). Over 410 to 412 (LHN) the chain is Periplasmic. Residues histidine 411 and histidine 419 each coordinate Fe(II)-heme o. A helical transmembrane segment spans residues 413–445 (SLFLIAHFHNVIIGGVVFGCFAGMTYWWPKAFG). A heme b-binding site is contributed by histidine 421. Residues 446-448 (FKL) are Cytoplasmic-facing. The chain crosses the membrane as a helical span at residues 449–477 (NETWGKRAFWFWIIGFFVAFMPLYALGFM). Residues 478-489 (GMTRRLSQQIDP) are Periplasmic-facing. The heme b site is built by arginine 481 and arginine 482. A helical membrane pass occupies residues 490 to 521 (QFHTMLMIAASGAVLIALGILCLVIQMYVSIR). Residues 522 to 587 (DRDQNRDLTG…DHYEEIHMPK (66 aa)) are Cytoplasmic-facing. A helical transmembrane segment spans residues 588 to 606 (NSGAGIVIAAFSTIFGFAM). At 607–613 (IWHIWWL) the chain is on the periplasmic side. A helical membrane pass occupies residues 614–632 (AIVGFAGMIITWIVKSFDE). Residues 633–663 (DVDYYVPVAEIEKLENQHFDEITKAGLKNGN) lie on the Cytoplasmic side of the membrane.

Belongs to the heme-copper respiratory oxidase family. In terms of assembly, the cytochrome bo(3) ubiquinol oxidase complex is a heterooctamer of two A chains, two B chains, two C chains and two D chains. Cu(2+) is required as a cofactor. It depends on heme b as a cofactor. Fe(II)-heme o serves as cofactor.

Its subcellular location is the cell inner membrane. It carries out the reaction 2 a ubiquinol + O2 + n H(+)(in) = 2 a ubiquinone + 2 H2O + n H(+)(out). Functionally, cytochrome bo(3) ubiquinol oxidase is the terminal enzyme in the aerobic respiratory chain of E.coli that predominates when cells are grown at high aeration. Catalyzes the four-electron reduction of O2 to water, using a ubiquinol as a membrane soluble electron donor for molecular oxygen reduction; ubiquinol-8 is the natural substrate for E.coli. Has proton pump activity across the membrane in addition to electron transfer, pumping 2 protons/electron and generating a proton motive force. All the redox centers of this enzyme complex are located within the largest subunit, subunit I. Protons are probably pumped via D- and K- channels found in this subunit. The protein is Cytochrome bo(3) ubiquinol oxidase subunit 1 (cyoB) of Escherichia coli O157:H7.